The primary structure comprises 317 residues: MPGEQQAEEEEEEEMQEEMVLLVKGEEEEGEEKYEVVKLKIPVDNKEVASQMPAPSADPARPHACPDCGRAFARRSTLAKHARTHTGERPFACTECGRCFSQKSALTKHGRTHTGERPYQCPECDKRFSAASNLRQHRRRHTGEKPYACAHCGRRFAQSSNYAQHLRVHTGEKPYACPDCGRAFGGSSCLARHRRTHTGERPYACADCGTRFAQSSALAKHRRVHTGEKPHRCAVCGRRFGHRSNLAEHARTHTGERPYPCTECGRRFRLSSHFIRHRRAHMRRRLYICAGCGRDFKLPASATAATPTERCPECEGS.

Lys-33 is covalently cross-linked (Glycyl lysine isopeptide (Lys-Gly) (interchain with G-Cter in SUMO2)). 8 consecutive C2H2-type zinc fingers follow at residues 63–85, 91–113, 119–141, 147–169, 175–197, 203–225, 231–253, and 259–281; these read HACPDCGRAFARRSTLAKHARTH, FACTECGRCFSQKSALTKHGRTH, YQCPECDKRFSAASNLRQHRRRH, YACAHCGRRFAQSSNYAQHLRVH, YACPDCGRAFGGSSCLARHRRTH, YACADCGTRFAQSSALAKHRRVH, HRCAVCGRRFGHRSNLAEHARTH, and YPCTECGRRFRLSSHFIRHRRAH.

This sequence belongs to the krueppel C2H2-type zinc-finger protein family.

It localises to the nucleus. May be involved in transcriptional regulation. The chain is Zinc finger protein 771 (Znf771) from Mus musculus (Mouse).